The sequence spans 372 residues: Probable dual-specificity RNA methyltransferase RlmN (372 aa).

The interval 1 to 20 is disordered; the sequence is MTSLPLTPVNPDAPARRAAM. Glu112 functions as the Proton acceptor in the catalytic mechanism. One can recognise a Radical SAM core domain in the interval 118–357; sequence YPDRVTVCLS…STTVRDTRGR (240 aa). Cys125 and Cys363 are joined by a disulfide. Positions 132, 136, and 139 each coordinate [4Fe-4S] cluster. S-adenosyl-L-methionine is bound by residues 187–188, Ser221, 244–246, and Asn320; these read GE and SLH. Cys363 functions as the S-methylcysteine intermediate in the catalytic mechanism.

Belongs to the radical SAM superfamily. RlmN family. It depends on [4Fe-4S] cluster as a cofactor.

It localises to the cytoplasm. It carries out the reaction adenosine(2503) in 23S rRNA + 2 reduced [2Fe-2S]-[ferredoxin] + 2 S-adenosyl-L-methionine = 2-methyladenosine(2503) in 23S rRNA + 5'-deoxyadenosine + L-methionine + 2 oxidized [2Fe-2S]-[ferredoxin] + S-adenosyl-L-homocysteine. The catalysed reaction is adenosine(37) in tRNA + 2 reduced [2Fe-2S]-[ferredoxin] + 2 S-adenosyl-L-methionine = 2-methyladenosine(37) in tRNA + 5'-deoxyadenosine + L-methionine + 2 oxidized [2Fe-2S]-[ferredoxin] + S-adenosyl-L-homocysteine. Specifically methylates position 2 of adenine 2503 in 23S rRNA and position 2 of adenine 37 in tRNAs. In Salinispora tropica (strain ATCC BAA-916 / DSM 44818 / JCM 13857 / NBRC 105044 / CNB-440), this protein is Probable dual-specificity RNA methyltransferase RlmN.